We begin with the raw amino-acid sequence, 380 residues long: 1-deoxy-D-xylulose 5-phosphate reductoisomerase (380 aa).

Residues threonine 10, glycine 11, serine 12, isoleucine 13, glycine 36, arginine 37, asparagine 38, and asparagine 120 each coordinate NADPH. Position 121 (lysine 121) interacts with 1-deoxy-D-xylulose 5-phosphate. Glutamate 122 contributes to the NADPH binding site. Aspartate 146 provides a ligand contact to Mn(2+). Residues serine 147, glutamate 148, serine 172, and histidine 195 each contribute to the 1-deoxy-D-xylulose 5-phosphate site. Position 148 (glutamate 148) interacts with Mn(2+). Glycine 201 serves as a coordination point for NADPH. 1-deoxy-D-xylulose 5-phosphate is bound by residues serine 208, asparagine 213, lysine 214, and glutamate 217. Position 217 (glutamate 217) interacts with Mn(2+).

This sequence belongs to the DXR family. The cofactor is Mg(2+). Mn(2+) serves as cofactor.

The enzyme catalyses 2-C-methyl-D-erythritol 4-phosphate + NADP(+) = 1-deoxy-D-xylulose 5-phosphate + NADPH + H(+). Its pathway is isoprenoid biosynthesis; isopentenyl diphosphate biosynthesis via DXP pathway; isopentenyl diphosphate from 1-deoxy-D-xylulose 5-phosphate: step 1/6. Catalyzes the NADPH-dependent rearrangement and reduction of 1-deoxy-D-xylulose-5-phosphate (DXP) to 2-C-methyl-D-erythritol 4-phosphate (MEP). This is 1-deoxy-D-xylulose 5-phosphate reductoisomerase from Listeria welshimeri serovar 6b (strain ATCC 35897 / DSM 20650 / CCUG 15529 / CIP 8149 / NCTC 11857 / SLCC 5334 / V8).